A 616-amino-acid chain; its full sequence is uncharacterized protein (616 aa).

It belongs to the UbiD family.

This is an uncharacterized protein from Helicobacter pylori (strain J99 / ATCC 700824) (Campylobacter pylori J99).